We begin with the raw amino-acid sequence, 1051 residues long: Serine/threonine-protein kinase ULK1 (1051 aa).

The Protein kinase domain maps to 16–278 (FSRKDLIGHG…FDEFFHHPFL (263 aa)). Residues 22–30 (IGHGAFAVV) and lysine 46 contribute to the ATP site. Aspartate 138 functions as the Proton acceptor in the catalytic mechanism. At lysine 162 the chain carries N6-acetyllysine. Disordered regions lie at residues 283-323 (PIKK…EMPQ), 335-358 (AGFL…DDFV), and 394-554 (GLES…CRLH). Residues 287–416 (SPPVPVPSYP…TCSSSPSPSG (130 aa)) form an interaction with GABARAP and GABARAPL2 region. Low complexity-rich tracts occupy residues 295 to 318 (YPSS…PPSL), 340 to 349 (GSRDSGGSSK), and 400 to 423 (RTPS…PFSS). Serine 317 is subject to Phosphoserine; by AMPK. Phosphoserine is present on residues serine 403 and serine 450. Residues 437–459 (QVHNYQRIEQNLQSPTQQQTARS) show a composition bias toward polar residues. Threonine 456 carries the phosphothreonine modification. Residues serine 467, serine 477, serine 479, and serine 521 each carry the phosphoserine modification. Serine 555 carries the phosphoserine; by AMPK modification. The residue at position 574 (threonine 574) is a Phosphothreonine. The residue at position 606 (lysine 606) is an N6-acetyllysine. The residue at position 635 (threonine 635) is a Phosphothreonine. A Phosphoserine; by AMPK modification is found at serine 637. Serine 638 is modified (phosphoserine). Disordered regions lie at residues 661-686 (PDLS…DTRG) and 727-787 (APSA…TGSS). Gly residues predominate over residues 731–745 (GFGGTLHPGARGGGA). Serine 757 is modified (phosphoserine; by MTOR). Serine 774 carries the phosphoserine modification. A compositionally biased stretch (low complexity) spans 774–787 (SVGSSSSLGSTGSS). Serine 777 bears the Phosphoserine; by AMPK mark. The interval 829-1051 (PDLPEETLME…LSALLSGVYA (223 aa)) is C-terminal domain; mediates interaction with SESN2.

It belongs to the protein kinase superfamily. Ser/Thr protein kinase family. APG1/unc-51/ULK1 subfamily. As to quaternary structure, interacts with GABARAP and GABARAPL2. Interacts (via C-terminus) with ATG13. Part of a complex consisting of ATG13, ATG101, ULK1 and RB1CC1. Associates with the mammalian target of rapamycin complex 1 (mTORC1) through an interaction with RPTOR; the association depends on nutrient conditions and is reduced during starvation. Interacts with FEZ1; SCOC interferes with FEZ1-binding. Interacts with TBC1D14. Interacts (phosphorylated form) with TRIM5. When phosphorylated at Ser-317, interacts with MEFV and BECN1 simultaneously. Interacts with TRIM21 and IRF3, in the presence of TRIM21. Interacts with SESN2. Interacts with SQSTM1. Interacts with C9orf72. Interacts with WDR45. Interacts with ATG13; this interaction is increased in the absence of TMEM39A. Interacts with WIPI2. Interacts with ATP2A2. Interacts with AMBRA1. Interacts with Irgm1; promoting the coassembly of ULK1 and BECN1. In terms of processing, autophosphorylated. Phosphorylated under nutrient-rich conditions; dephosphorylated during starvation or following treatment with rapamycin. In response to nutrient limitation, phosphorylated and activated by AMPK, leading to activate autophagy. Under nutrient sufficiency, phosphorylated by MTOR/mTOR, disrupting the interaction with AMPK and preventing activation of ULK1. Post-translationally, ubiquitinated via 'Lys-63'-linkage by a complex composed of AMBRA1 and TRAF6 following autophagy induction, promoting ULK1 stability and kinase activity. Deubiquitinated by USP20; leading to ULK1 stability and autophagy initiation. Acetylated by KAT5/TIP60 under autophagy induction, promoting protein kinase activity.

The protein resides in the cytoplasm. Its subcellular location is the cytosol. The protein localises to the preautophagosomal structure. It carries out the reaction L-seryl-[protein] + ATP = O-phospho-L-seryl-[protein] + ADP + H(+). The catalysed reaction is L-threonyl-[protein] + ATP = O-phospho-L-threonyl-[protein] + ADP + H(+). Its activity is regulated as follows. Acetylation by KAT5/TIP60 stimulates the protein kinase activity. The protein kinase activity is activated by unanchored 'Lys-63'-linked polyubiquitin chains: unanchored 'Lys-63'-linked polyubiquitin chains are catalyzed by TRIM32 in an AMBRA1-dependent manner. Its function is as follows. Serine/threonine-protein kinase involved in autophagy in response to starvation. Acts upstream of phosphatidylinositol 3-kinase PIK3C3 to regulate the formation of autophagophores, the precursors of autophagosomes. Part of regulatory feedback loops in autophagy: acts both as a downstream effector and negative regulator of mammalian target of rapamycin complex 1 (mTORC1) via interaction with RPTOR. Activated via phosphorylation by AMPK and also acts as a regulator of AMPK by mediating phosphorylation of AMPK subunits PRKAA1, PRKAB2 and PRKAG1, leading to negatively regulate AMPK activity. May phosphorylate ATG13/KIAA0652 and RPTOR; however such data need additional evidences. Plays a role early in neuronal differentiation and is required for granule cell axon formation. Also phosphorylates SESN2 and SQSTM1 to regulate autophagy. Phosphorylates FLCN, promoting autophagy. Phosphorylates AMBRA1 in response to autophagy induction, releasing AMBRA1 from the cytoskeletal docking site to induce autophagosome nucleation. Phosphorylates ATG4B, leading to inhibit autophagy by decreasing both proteolytic activation and delipidation activities of ATG4B. The sequence is that of Serine/threonine-protein kinase ULK1 (Ulk1) from Mus musculus (Mouse).